The following is a 100-amino-acid chain: UPF0235 protein NE0395 (100 aa).

This sequence belongs to the UPF0235 family.

The protein is UPF0235 protein NE0395 of Nitrosomonas europaea (strain ATCC 19718 / CIP 103999 / KCTC 2705 / NBRC 14298).